The sequence spans 61 residues: Small ribosomal subunit protein uS14 (61 aa).

Zn(2+) contacts are provided by C24, C27, C40, and C43.

Belongs to the universal ribosomal protein uS14 family. Zinc-binding uS14 subfamily. In terms of assembly, part of the 30S ribosomal subunit. Contacts proteins S3 and S10. Zn(2+) is required as a cofactor.

Functionally, binds 16S rRNA, required for the assembly of 30S particles and may also be responsible for determining the conformation of the 16S rRNA at the A site. The protein is Small ribosomal subunit protein uS14 of Roseiflexus sp. (strain RS-1).